Consider the following 127-residue polypeptide: UPF0102 protein Cpha266_0037 (127 aa).

The protein belongs to the UPF0102 family.

In Chlorobium phaeobacteroides (strain DSM 266 / SMG 266 / 2430), this protein is UPF0102 protein Cpha266_0037.